The following is a 230-amino-acid chain: Alpha-S1-casein (230 aa).

The N-terminal stretch at 1–15 (MKLLILTCLVAVALA) is a signal peptide. Residues serine 33, serine 83, serine 85, serine 86, serine 87, and serine 88 each carry the phosphoserine modification. Basic and acidic residues predominate over residues 60 to 83 (DELKDTRNEPTEDHIMEDTERKES). 2 disordered regions span residues 60–103 (DELK…DILK) and 211–230 (TPEG…PQWW). Over residues 84-96 (GSSSSEEVVSSTT) the composition is skewed to low complexity.

It belongs to the alpha-casein family. As to expression, mammary gland specific. Secreted in milk.

Its subcellular location is the secreted. In terms of biological role, important role in the capacity of milk to transport calcium phosphate. The sequence is that of Alpha-S1-casein (CSN1S1) from Camelus dromedarius (Dromedary).